A 484-amino-acid chain; its full sequence is Glutamate--tRNA ligase (484 aa).

The 'HIGH' region signature appears at 12-22 (PSPTGEPHVGT). The 'KMSKS' region signature appears at 253–257 (KLSKR). ATP is bound at residue Lys256.

It belongs to the class-I aminoacyl-tRNA synthetase family. Glutamate--tRNA ligase type 1 subfamily. As to quaternary structure, monomer.

It localises to the cytoplasm. It catalyses the reaction tRNA(Glu) + L-glutamate + ATP = L-glutamyl-tRNA(Glu) + AMP + diphosphate. Functionally, catalyzes the attachment of glutamate to tRNA(Glu) in a two-step reaction: glutamate is first activated by ATP to form Glu-AMP and then transferred to the acceptor end of tRNA(Glu). The protein is Glutamate--tRNA ligase of Rhizobium etli (strain CIAT 652).